The primary structure comprises 416 residues: Lysosome-associated membrane glycoprotein 3 (416 aa).

The first 27 residues, 1 to 27 (MPRQLSAAAVLFASLAVILHDGSQMRA), serve as a signal peptide directing secretion. Over 28-381 (KAFPKTRDYS…NVDECSSDYT (354 aa)) the chain is Lumenal. Residues 135-217 (PPTITPPAHT…ASTVPGSTLA (83 aa)) are disordered. The segment covering 142 to 170 (AHTTGTSSSTVNHTTGNATQPSNQTTLPA) has biased composition (polar residues). A compositionally biased stretch (low complexity) spans 188–208 (PTHAPGTTAAAHNTTRTAAPA). N-linked (GlcNAc...) asparagine glycosylation occurs at asparagine 200. An intrachain disulfide couples cysteine 237 to cysteine 274. Asparagine 291 carries an N-linked (GlcNAc...) asparagine glycan. A disulfide bridge connects residues cysteine 339 and cysteine 376. The chain crosses the membrane as a helical span at residues 382-402 (IVLPVIGAIVVGLCLVGMGVY). The Cytoplasmic portion of the chain corresponds to 403 to 416 (KIRLRCQSSGYQRI).

The protein belongs to the LAMP family. In terms of assembly, monomer. Interacts with FURIN.

Its subcellular location is the cell surface. It localises to the lysosome membrane. The protein localises to the cytoplasmic vesicle membrane. The protein resides in the early endosome membrane. Lysosomal membrane glycoprotein which plays a role in the unfolded protein response (UPR) that contributes to protein degradation and cell survival during proteasomal dysfunction. Plays a role in the process of fusion of the lysosome with the autophagosome, thereby modulating the autophagic process. Promotes hepatocellular lipogenesis through activation of the PI3K/Akt pathway. May also play a role in dendritic cell function and in adaptive immunity. The protein is Lysosome-associated membrane glycoprotein 3 (LAMP3) of Macaca mulatta (Rhesus macaque).